The sequence spans 180 residues: uncharacterized protein (180 aa).

The protein belongs to the isochorismatase family.

This is an uncharacterized protein from Bacillus subtilis (strain 168).